The chain runs to 242 residues: Haloacid dehalogenase-like hydrolase domain-containing protein 3 (242 aa).

Belongs to the HAD-like hydrolase superfamily.

This chain is Haloacid dehalogenase-like hydrolase domain-containing protein 3 (hdhd3), found in Danio rerio (Zebrafish).